The sequence spans 370 residues: Death-associated protein kinase 2 (370 aa).

The Protein kinase domain maps to 23–285; that stretch reads YDIGEELGSG…IQEALRHPWI (263 aa). Residues 29–37 and Lys52 each bind ATP; that span reads LGSGQFAIV. The Proton acceptor role is filled by Asp149. Residues 287–354 are calmodulin-binding; it reads PVDTQQAMVR…RNCESDTEEN (68 aa). The autoinhibitory domain stretch occupies residues 292–301; that stretch reads QAMVRRESVV. At Ser299 the chain carries Phosphoserine. Ser318 carries the phosphoserine; by autocatalysis modification. A Phosphoserine modification is found at Ser349. At Thr369 the chain carries Phosphothreonine.

Belongs to the protein kinase superfamily. CAMK Ser/Thr protein kinase family. DAP kinase subfamily. Homodimer in its autoinhibited state. Active as monomer. Interacts with 14-3-3 proteins YWHAB, YWHAE, YWHAG, YWHAH, YWHAQ, YWHAZ and SFN; the interaction requires DAPK2 phosphorylation at Thr-369 and suppresses DAPK2 kinase activity and DAPK2-induced apoptosis. Mg(2+) is required as a cofactor. Autophosphorylation at Ser-318 inhibits its catalytic activity. Dephosphorylated at Ser-318 in response to activated Fas and TNF-alpha receptors. Expressed in peritubular interstitial cells of the renal cortex. Isoform 1 is found in the adult brain while isoform 2 is expressed in brains of embryos and young mice (at protein level).

It is found in the cytoplasm. The protein localises to the cytoplasmic vesicle. Its subcellular location is the autophagosome lumen. The catalysed reaction is L-seryl-[protein] + ATP = O-phospho-L-seryl-[protein] + ADP + H(+). It catalyses the reaction L-threonyl-[protein] + ATP = O-phospho-L-threonyl-[protein] + ADP + H(+). Activated by Ca(2+)/calmodulin. Regulated by a double locking mechanism, involving autophosphorylation at Ser-318, calmodulin binding, and dimerization. In the inactive state, Ser-318 is phosphorylated, and the kinase is dimeric. Activation involves: dephosphorylation at Ser-318, release-of-autoinhibition mechanism where calmodulin binding induces a conformational change that relieves the steric block of the active site by the autoinhibitory domain, and generation of the monomeric active form of the kinase. In terms of biological role, calcium/calmodulin-dependent serine/threonine kinase involved in multiple cellular signaling pathways that trigger cell survival, apoptosis, and autophagy. Capable of regulating both type I apoptotic and type II autophagic cell death signals. The former involves caspase activation, chromatin and mitochondrial condensation while the latter involves caspase-independent cell death in conjunction with accumulation of mature autophagic vesicles, plasma membrane blebs, and nuclear condensation without DNA degradation. Mediator of anoikis and a suppressor of beta-catenin-dependent anchorage-independent growth of malignant epithelial cells. May play a role in granulocytic maturation. Regulates granulocytes motility by controlling cell spreading and polarization. The polypeptide is Death-associated protein kinase 2 (Dapk2) (Mus musculus (Mouse)).